Reading from the N-terminus, the 194-residue chain is Outer surface 22 kDa lipoprotein (194 aa).

The first 21 residues, 1 to 21 (MYKNGFFKNYLSLFLIFLVIA), serve as a signal peptide directing secretion. Residue Cys-22 is the site of N-palmitoyl cysteine attachment. Residue Cys-22 is the site of S-diacylglycerol cysteine attachment.

It localises to the cell outer membrane. This Borreliella burgdorferi (strain ZS7) (Borrelia burgdorferi) protein is Outer surface 22 kDa lipoprotein (p22).